Consider the following 120-residue polypeptide: Myohemerythrin (120 aa).

Histidine 26, histidine 56, glutamate 60, histidine 75, histidine 79, histidine 108, and aspartate 113 together coordinate Fe cation.

This sequence belongs to the hemerythrin family.

Its function is as follows. Myohemerythrin is an oxygen-binding protein found in the retractor muscles of certain worms. The oxygen-binding site contains two iron atoms. In Sipunculus nudus (Sipunculan worm), this protein is Myohemerythrin.